The following is a 245-amino-acid chain: 1-(5-phosphoribosyl)-5-[(5-phosphoribosylamino)methylideneamino] imidazole-4-carboxamide isomerase (245 aa).

Asp7 acts as the Proton acceptor in catalysis. Asp129 functions as the Proton donor in the catalytic mechanism.

Belongs to the HisA/HisF family.

It is found in the cytoplasm. It catalyses the reaction 1-(5-phospho-beta-D-ribosyl)-5-[(5-phospho-beta-D-ribosylamino)methylideneamino]imidazole-4-carboxamide = 5-[(5-phospho-1-deoxy-D-ribulos-1-ylimino)methylamino]-1-(5-phospho-beta-D-ribosyl)imidazole-4-carboxamide. Its pathway is amino-acid biosynthesis; L-histidine biosynthesis; L-histidine from 5-phospho-alpha-D-ribose 1-diphosphate: step 4/9. The polypeptide is 1-(5-phosphoribosyl)-5-[(5-phosphoribosylamino)methylideneamino] imidazole-4-carboxamide isomerase (Pectobacterium carotovorum subsp. carotovorum (strain PC1)).